A 238-amino-acid chain; its full sequence is MRTLFVGDLHLSADRPDITQAFLTFLETQLTDTSALYILGDLFEVWVGDDIAEPFANQLADAIKLASKKLPIYFIHGNRDFLIGERFAQRSGMTLLPEVYKLDLYGTTTVLLHGDSLCTLDKPYQRFRKFRNLSWAKWIYNHLPKSKRLNIAAKLRSKSQSSNQHKSYSIMDVEPSAVLELLDNTNAQQMIHGHTHRPAIHQLSNGKRRIVVGDWYEQGSMLCISQDNVELIELPFGK.

Mn(2+) contacts are provided by Asp8, His10, Asp41, Asn78, and His113. 78-79 lines the substrate pocket; that stretch reads NR. 5 residues coordinate substrate: Asp121, Ser159, Asn163, Lys166, and His194. Mn(2+) contacts are provided by His194 and His196.

This sequence belongs to the LpxH family. Mn(2+) is required as a cofactor.

The protein localises to the cell inner membrane. The enzyme catalyses UDP-2-N,3-O-bis[(3R)-3-hydroxytetradecanoyl]-alpha-D-glucosamine + H2O = 2-N,3-O-bis[(3R)-3-hydroxytetradecanoyl]-alpha-D-glucosaminyl 1-phosphate + UMP + 2 H(+). The protein operates within glycolipid biosynthesis; lipid IV(A) biosynthesis; lipid IV(A) from (3R)-3-hydroxytetradecanoyl-[acyl-carrier-protein] and UDP-N-acetyl-alpha-D-glucosamine: step 4/6. In terms of biological role, hydrolyzes the pyrophosphate bond of UDP-2,3-diacylglucosamine to yield 2,3-diacylglucosamine 1-phosphate (lipid X) and UMP by catalyzing the attack of water at the alpha-P atom. Involved in the biosynthesis of lipid A, a phosphorylated glycolipid that anchors the lipopolysaccharide to the outer membrane of the cell. The sequence is that of UDP-2,3-diacylglucosamine hydrolase from Shewanella piezotolerans (strain WP3 / JCM 13877).